Reading from the N-terminus, the 448-residue chain is Noelin-2 (448 aa).

An N-terminal signal peptide occupies residues Met-1–Gly-14. Coiled-coil stretches lie at residues Arg-52–Arg-79 and Leu-130–Leu-187. 6 N-linked (GlcNAc...) asparagine glycosylation sites follow: Asn-68, Asn-149, Asn-269, Asn-304, Asn-393, and Asn-435. The Olfactomedin-like domain occupies Gly-188–His-440. Cys-189 and Cys-371 form a disulfide bridge.

In terms of assembly, peripherally associated with AMPAR complex. AMPAR complex consists of an inner core made of 4 pore-forming GluA/GRIA proteins (GRIA1, GRIA2, GRIA3 and GRIA4) and 4 major auxiliary subunits arranged in a twofold symmetry. One of the two pairs of distinct binding sites is occupied either by CNIH2, CNIH3 or CACNG2, CACNG3. The other harbors CACNG2, CACNG3, CACNG4, CACNG8 or GSG1L. This inner core of AMPAR complex is complemented by outer core constituents binding directly to the GluA/GRIA proteins at sites distinct from the interaction sites of the inner core constituents. Outer core constituents include at least PRRT1, PRRT2, CKAMP44/SHISA9, FRRS1L and NRN1. The proteins of the inner and outer core serve as a platform for other, more peripherally associated AMPAR constituents, including OLFM2. Alone or in combination, these auxiliary subunits control the gating and pharmacology of the AMPAR complex and profoundly impact their biogenesis and protein processing. Interacts with GRIA2. Interacts with OLFM1 and OLFM3. Interacts with SRF; the interaction promotes dissociation of SRF from the transcriptional repressor HEY2. Interacts with RUNX2. Expressed in the brain (at protein level). In the developing eye, first detected at 12 dpc in the retinal pigmented epithelium and preferentially expressed in differentiating retinal ganglion cells between 15 and 18 dpc. In the brain, expression is detected mainly in the olfactory bulb, cortex, piriform cortex, olfactory trabeculae, and inferior and superior colliculus. In the adult eye, expression is detected mainly in retinal ganglion cells. Expressed in carotid arteries.

It is found in the secreted. Its subcellular location is the synapse. The protein resides in the membrane. It localises to the nucleus. The protein localises to the cytoplasm. In terms of biological role, involved in transforming growth factor beta (TGF-beta)-induced smooth muscle differentiation. TGF-beta induces expression and nuclear translocation of OLFM2 where it binds to SRF, causing its dissociation from the transcriptional repressor HEY2/HERP1 and facilitating binding of SRF to target genes. Plays a role in AMPAR complex organization. Is a regulator of vascular smooth-muscle cell (SMC) phenotypic switching, that acts by promoting RUNX2 and inhibiting MYOCD binding to SRF. SMC phenotypic switching is the process through which vascular SMCs undergo transition between a quiescent contractile phenotype and a proliferative synthetic phenotype in response to pathological stimuli. SMC phenotypic plasticity is essential for vascular development and remodeling. The polypeptide is Noelin-2 (Olfm2) (Mus musculus (Mouse)).